Here is a 338-residue protein sequence, read N- to C-terminus: Ketol-acid reductoisomerase (NADP(+)) (338 aa).

The KARI N-terminal Rossmann domain maps to 1–181 (MNVFYDKDAD…GGGRAGIIET (181 aa)). Residues 24–27 (YGSQ), R47, and S52 contribute to the NADP(+) site. H107 is a catalytic residue. An NADP(+)-binding site is contributed by G133. Positions 182 to 327 (NFREETETDL…AKLRAMMPWI (146 aa)) constitute a KARI C-terminal knotted domain. Residues D190, E194, E226, and E230 each coordinate Mg(2+). S251 provides a ligand contact to substrate.

This sequence belongs to the ketol-acid reductoisomerase family. It depends on Mg(2+) as a cofactor.

The catalysed reaction is (2R)-2,3-dihydroxy-3-methylbutanoate + NADP(+) = (2S)-2-acetolactate + NADPH + H(+). It carries out the reaction (2R,3R)-2,3-dihydroxy-3-methylpentanoate + NADP(+) = (S)-2-ethyl-2-hydroxy-3-oxobutanoate + NADPH + H(+). It participates in amino-acid biosynthesis; L-isoleucine biosynthesis; L-isoleucine from 2-oxobutanoate: step 2/4. Its pathway is amino-acid biosynthesis; L-valine biosynthesis; L-valine from pyruvate: step 2/4. Its function is as follows. Involved in the biosynthesis of branched-chain amino acids (BCAA). Catalyzes an alkyl-migration followed by a ketol-acid reduction of (S)-2-acetolactate (S2AL) to yield (R)-2,3-dihydroxy-isovalerate. In the isomerase reaction, S2AL is rearranged via a Mg-dependent methyl migration to produce 3-hydroxy-3-methyl-2-ketobutyrate (HMKB). In the reductase reaction, this 2-ketoacid undergoes a metal-dependent reduction by NADPH to yield (R)-2,3-dihydroxy-isovalerate. This Burkholderia lata (strain ATCC 17760 / DSM 23089 / LMG 22485 / NCIMB 9086 / R18194 / 383) protein is Ketol-acid reductoisomerase (NADP(+)).